We begin with the raw amino-acid sequence, 295 residues long: MFHLQGPQLLQMLEKSLRKSLPESLKVYGTVFHMNQGNPFNLKALVDKWPDFKTVVIRPQEQEMADDFDHYTNTYQIYSKDLNNCQESLATSDVINWKQHLQIQSSQSSLNEVVQNLAATKFVKVEHTQCILYVMPETARKLLPSLPETKNLPVGYGAPKAINQEMFKLSSMDPTHAALVNKFWHFGGNERSQRFIERCIRAFPTFCLLGPEGTPASWSLMDQTGEIRMGATLPEYRGHGLISHMLAVHTRALDQLGIPVYNHTDKANKIVQKVSHNLHHIAIPHGWNQWNCEPL.

Position 43 is an N6-acetyllysine (Lys-43). At Lys-48 the chain carries N6-acetyllysine; alternate. Lys-48 carries the post-translational modification N6-succinyllysine; alternate. Position 80 is an N6-acetyllysine (Lys-80). Lys-182 carries the post-translational modification N6-acetyllysine; alternate. Lys-182 bears the N6-succinyllysine; alternate mark.

This sequence belongs to the glycine N-acyltransferase family.

The protein resides in the mitochondrion. The catalysed reaction is phenylacetyl-CoA + glycine = phenylacetylglycine + CoA + H(+). Functionally, mitochondrial acyltransferase which transfers the acyl group to the N-terminus of glycine. Can conjugate a multitude of substrates to form a variety of N-acylglycines. Catalyzes the conjugation of arylacetic acids with glycine but does not have activity towards any alkyl-CoA. This chain is Glycine N-phenylacetyltransferase, found in Bos taurus (Bovine).